An 867-amino-acid polypeptide reads, in one-letter code: Retinoblastoma-related protein 1 (867 aa).

The domain A stretch occupies residues 275–476 (TPVTSAMTTA…EKGSSLYNSL (202 aa)). Residues 275–722 (TPVTSAMTTA…NEVFVPAAKP (448 aa)) form a pocket; binds RPD3I and RBAP1 region. The spacer stretch occupies residues 477 to 594 (IVARPSVASE…PVGGNEKCAD (118 aa)). The tract at residues 512–563 (EGLPATPSKKRAAGPDDNADPRSPKRSCNESRNTVVERNLQTPPPKQSHMVS) is disordered. The segment covering 530 to 540 (ADPRSPKRSCN) has biased composition (basic and acidic residues). A compositionally biased stretch (polar residues) spans 541 to 552 (ESRNTVVERNLQ). Residues 595–722 (VTIHIFFSKI…NEVFVPAAKP (128 aa)) form a domain B region. Disordered regions lie at residues 734 to 762 (PEDK…MSPK) and 843 to 867 (QING…ETDT).

This sequence belongs to the retinoblastoma protein (RB) family. Interacts with RPD3I, RBAP1, the Arabidopsis cyclin CYCD3-1, the mastrevirus replication-associated protein A (RepA) and the begomovirus replication-associated protein (Rep). Ubiquitous.

It is found in the nucleus. Regulator of biological processes that recruits a histone deacetylase to control gene transcription. May play a role in the entry into mitosis, negatively regulating the cell proliferation. Formation of stable complexes with geminiviridae replication-associated proteins may create a cellular environment which favors viral DNA replication. The protein is Retinoblastoma-related protein 1 (RBR1) of Zea mays (Maize).